Reading from the N-terminus, the 295-residue chain is Glutamyl-Q tRNA(Asp) synthetase (295 aa).

Residues 9-13 and glutamate 45 each bind L-glutamate; that span reads RFAPT. The 'HIGH' region motif lies at 12-22; the sequence is PTPSGFLHFGS. 4 residues coordinate Zn(2+): cysteine 101, cysteine 103, tyrosine 115, and cysteine 119. L-glutamate-binding residues include tyrosine 172 and arginine 190. The 'KMSKS' region motif lies at 228–232; it reads KLGKS. Lysine 231 lines the ATP pocket.

This sequence belongs to the class-I aminoacyl-tRNA synthetase family. GluQ subfamily. The cofactor is Zn(2+).

Its function is as follows. Catalyzes the tRNA-independent activation of glutamate in presence of ATP and the subsequent transfer of glutamate onto a tRNA(Asp). Glutamate is transferred on the 2-amino-5-(4,5-dihydroxy-2-cyclopenten-1-yl) moiety of the queuosine in the wobble position of the QUC anticodon. This is Glutamyl-Q tRNA(Asp) synthetase from Pseudomonas putida (strain W619).